The primary structure comprises 257 residues: 5'-nucleotidase SurE (257 aa).

A divalent metal cation-binding residues include D8, D9, S40, and N92.

Belongs to the SurE nucleotidase family. A divalent metal cation is required as a cofactor.

It is found in the cytoplasm. The catalysed reaction is a ribonucleoside 5'-phosphate + H2O = a ribonucleoside + phosphate. Its function is as follows. Nucleotidase that shows phosphatase activity on nucleoside 5'-monophosphates. This chain is 5'-nucleotidase SurE, found in Rhizobium leguminosarum bv. trifolii (strain WSM2304).